The following is an 851-amino-acid chain: Meiotically up-regulated gene 87 protein (851 aa).

Belongs to the nucleoporin interacting component (NIC) family.

The protein resides in the nucleus envelope. Functionally, has a role in meiosis. In Schizosaccharomyces pombe (strain 972 / ATCC 24843) (Fission yeast), this protein is Meiotically up-regulated gene 87 protein (mug87).